Reading from the N-terminus, the 212-residue chain is Thiamine-phosphate synthase (212 aa).

4-amino-2-methyl-5-(diphosphooxymethyl)pyrimidine-binding positions include 40 to 44 (QFREK) and N75. The Mg(2+) site is built by D76 and D95. Residue S113 participates in 4-amino-2-methyl-5-(diphosphooxymethyl)pyrimidine binding. 139 to 141 (TTS) provides a ligand contact to 2-[(2R,5Z)-2-carboxy-4-methylthiazol-5(2H)-ylidene]ethyl phosphate. K142 contacts 4-amino-2-methyl-5-(diphosphooxymethyl)pyrimidine. 2-[(2R,5Z)-2-carboxy-4-methylthiazol-5(2H)-ylidene]ethyl phosphate contacts are provided by residues G171 and 191-192 (IS).

Belongs to the thiamine-phosphate synthase family. Mg(2+) is required as a cofactor.

The catalysed reaction is 2-[(2R,5Z)-2-carboxy-4-methylthiazol-5(2H)-ylidene]ethyl phosphate + 4-amino-2-methyl-5-(diphosphooxymethyl)pyrimidine + 2 H(+) = thiamine phosphate + CO2 + diphosphate. The enzyme catalyses 2-(2-carboxy-4-methylthiazol-5-yl)ethyl phosphate + 4-amino-2-methyl-5-(diphosphooxymethyl)pyrimidine + 2 H(+) = thiamine phosphate + CO2 + diphosphate. It carries out the reaction 4-methyl-5-(2-phosphooxyethyl)-thiazole + 4-amino-2-methyl-5-(diphosphooxymethyl)pyrimidine + H(+) = thiamine phosphate + diphosphate. The protein operates within cofactor biosynthesis; thiamine diphosphate biosynthesis; thiamine phosphate from 4-amino-2-methyl-5-diphosphomethylpyrimidine and 4-methyl-5-(2-phosphoethyl)-thiazole: step 1/1. In terms of biological role, condenses 4-methyl-5-(beta-hydroxyethyl)thiazole monophosphate (THZ-P) and 2-methyl-4-amino-5-hydroxymethyl pyrimidine pyrophosphate (HMP-PP) to form thiamine monophosphate (TMP). In Staphylococcus saprophyticus subsp. saprophyticus (strain ATCC 15305 / DSM 20229 / NCIMB 8711 / NCTC 7292 / S-41), this protein is Thiamine-phosphate synthase.